Reading from the N-terminus, the 248-residue chain is Transcriptional activator protein FnrL (248 aa).

The HTH crp-type domain maps to 154 to 232; sequence KTAREKIASL…KRHVIVTDFA (79 aa). The segment at residues 191–210 is a DNA-binding region (H-T-H motif); the sequence is REEMADYLGLTLETVSRQVS.

Its function is as follows. Anaerobic regulatory protein; transcriptional activator of hemA. Appears to regulate other genes. In Cereibacter sphaeroides (strain ATCC 17023 / DSM 158 / JCM 6121 / CCUG 31486 / LMG 2827 / NBRC 12203 / NCIMB 8253 / ATH 2.4.1.) (Rhodobacter sphaeroides), this protein is Transcriptional activator protein FnrL (fnrL).